Consider the following 365-residue polypeptide: 3-dehydroquinate synthase (365 aa).

NAD(+) is bound by residues Gly95–Asp99, Thr119–Thr120, Lys132, and Lys141. Zn(2+) is bound by residues Glu174, His238, and His255.

The protein belongs to the sugar phosphate cyclases superfamily. Dehydroquinate synthase family. It depends on Co(2+) as a cofactor. Zn(2+) serves as cofactor. Requires NAD(+) as cofactor.

The protein localises to the cytoplasm. The catalysed reaction is 7-phospho-2-dehydro-3-deoxy-D-arabino-heptonate = 3-dehydroquinate + phosphate. It functions in the pathway metabolic intermediate biosynthesis; chorismate biosynthesis; chorismate from D-erythrose 4-phosphate and phosphoenolpyruvate: step 2/7. In terms of biological role, catalyzes the conversion of 3-deoxy-D-arabino-heptulosonate 7-phosphate (DAHP) to dehydroquinate (DHQ). This is 3-dehydroquinate synthase from Chlorobium chlorochromatii (strain CaD3).